Reading from the N-terminus, the 355-residue chain is Galactoside 2-alpha-L-fucosyltransferase (355 aa).

The Cytoplasmic segment spans residues methionine 1–lysine 15. Residues serine 16–proline 36 traverse the membrane as a helical; Signal-anchor for type II membrane protein segment. The Lumenal portion of the chain corresponds to arginine 37–lysine 355. Residues asparagine 92, asparagine 311, and asparagine 349 are each glycosylated (N-linked (GlcNAc...) asparagine).

It belongs to the glycosyltransferase 11 family. In terms of tissue distribution, expression is restricted to the 20 intestinal cells in larvae and adult.

Its subcellular location is the golgi apparatus. The protein localises to the golgi stack membrane. Its pathway is protein modification; protein glycosylation. Functionally, selectively catalyzes the addition of fucose in alpha 1-2 linkage to Gal-beta-(1-&gt;4)-Xyl-beta-R, Gal-beta-(1-&gt;6)-GlcNAc-R, Gal-beta-(1-&gt;3)-Gal-beta-(1-&gt;4)-Glc and Gal-beta-(1-&gt;3)-Gal-beta-(1-&gt;4)-Xyl-R acceptors but not Gal-beta-(1-&gt;3)-GlcNAc-beta-(1-&gt;3)-Gal-beta-(1-&gt;4)-Glc. Unlike in mammals, unable to fucosylate Gal-beta-(1-&gt;4)-Glc-beta-R. The polypeptide is Galactoside 2-alpha-L-fucosyltransferase (Caenorhabditis elegans).